A 551-amino-acid chain; its full sequence is Glucans biosynthesis protein D (551 aa).

Positions 1 to 32 form a signal peptide, tat-type signal; that stretch reads MNRRRFIKGSMAMAAVCGSSGIASLFSQAAFA.

Belongs to the OpgD/OpgG family. Post-translationally, predicted to be exported by the Tat system. The position of the signal peptide cleavage has not been experimentally proven.

It localises to the periplasm. It functions in the pathway glycan metabolism; osmoregulated periplasmic glucan (OPG) biosynthesis. Probably involved in the control of the structural glucose backbone of osmoregulated periplasmic glucans (OPGs). The chain is Glucans biosynthesis protein D from Salmonella paratyphi A (strain ATCC 9150 / SARB42).